Consider the following 324-residue polypeptide: Probable UDP-sugar transporter protein SLC35A4 (324 aa).

At 1-18 the chain is on the cytoplasmic side; that stretch reads MSVEDGGMPGLARPKQAR. The chain crosses the membrane as a helical span at residues 19-39; that stretch reads WTLMLFLSTAMYGAHAPFLAL. The Lumenal portion of the chain corresponds to 40–52; the sequence is CHVDGRVPFRPSS. Residues 53–73 form a helical membrane-spanning segment; that stretch reads AVLLTELTKLLLCAFSLLVGW. Residues 74-85 lie on the Cytoplasmic side of the membrane; it reads QTWPQGTPPWRQ. Residues 86 to 106 traverse the membrane as a helical segment; sequence AAPFALSALLYGANNNLVIYL. The Lumenal segment spans residues 107–142; sequence QRYMDPSTYQVLSNLKIGSTALLYCLCLGHRLSARQ. The helical transmembrane segment at 143 to 163 threads the bilayer; that stretch reads GLALLLLMAAGACYASGGFQE. Topologically, residues 164 to 180 are cytoplasmic; the sequence is PGNTLPGPRSAAGARPM. The helical transmembrane segment at 181 to 201 threads the bilayer; sequence PLHITPLGLLLLILYCLISGL. The Lumenal segment spans residues 202 to 214; sequence SSVYTELIMKRQR. Residues 215 to 235 traverse the membrane as a helical segment; it reads LPLALQNLFLYTFGVILNLGL. Topologically, residues 236–248 are cytoplasmic; sequence YAGSGPGPGFLEG. The helical transmembrane segment at 249-271 threads the bilayer; the sequence is FSGWAVLVVLNQAVNGLLMSAVM. At 272 to 279 the chain is on the lumenal side; it reads KHGSSITR. The chain crosses the membrane as a helical span at residues 280 to 300; sequence LFIVSCSLVVNAVLSAVLLQL. Residues 301-324 are Cytoplasmic-facing; that stretch reads QLTATFFLAALLIGLAVCLYYGSP.

This sequence belongs to the nucleotide-sugar transporter family. SLC35A subfamily. In terms of assembly, found in a complex with SLC35A2 and SLC35A3. Expressed in the kidney, lung, testis, and prostate. Expressed in the brain by sets of neurons, such as the pyramidal cells of the cortex, the Purkinje cells of the cerebellum, and the motoneurons of the brainstem.

Its subcellular location is the golgi apparatus membrane. The enzyme catalyses CDP-L-ribitol(in) + CDP(out) = CDP-L-ribitol(out) + CDP(in). Mediates the transport of CDP-ribitol. Does not exhibit CMP-sialic acid, UDP-galactose and UDP-N-acetylglucosamine transport activity. The sequence is that of Probable UDP-sugar transporter protein SLC35A4 from Rattus norvegicus (Rat).